Here is a 196-residue protein sequence, read N- to C-terminus: Pyridoxal 5'-phosphate synthase subunit PdxT (196 aa).

L-glutamine is bound at residue 47 to 49 (GES). The active-site Nucleophile is the cysteine 79. Residues arginine 106 and 134 to 135 (IR) contribute to the L-glutamine site. Active-site charge relay system residues include histidine 170 and glutamate 172.

It belongs to the glutaminase PdxT/SNO family. In terms of assembly, in the presence of PdxS, forms a dodecamer of heterodimers. Only shows activity in the heterodimer.

The enzyme catalyses aldehydo-D-ribose 5-phosphate + D-glyceraldehyde 3-phosphate + L-glutamine = pyridoxal 5'-phosphate + L-glutamate + phosphate + 3 H2O + H(+). It catalyses the reaction L-glutamine + H2O = L-glutamate + NH4(+). The protein operates within cofactor biosynthesis; pyridoxal 5'-phosphate biosynthesis. In terms of biological role, catalyzes the hydrolysis of glutamine to glutamate and ammonia as part of the biosynthesis of pyridoxal 5'-phosphate. The resulting ammonia molecule is channeled to the active site of PdxS. This chain is Pyridoxal 5'-phosphate synthase subunit PdxT, found in Halalkalibacterium halodurans (strain ATCC BAA-125 / DSM 18197 / FERM 7344 / JCM 9153 / C-125) (Bacillus halodurans).